The sequence spans 189 residues: GTP cyclohydrolase 1 (189 aa).

Zn(2+) contacts are provided by Cys79, His82, and Cys150.

The protein belongs to the GTP cyclohydrolase I family. As to quaternary structure, homomer.

It catalyses the reaction GTP + H2O = 7,8-dihydroneopterin 3'-triphosphate + formate + H(+). The protein operates within cofactor biosynthesis; 7,8-dihydroneopterin triphosphate biosynthesis; 7,8-dihydroneopterin triphosphate from GTP: step 1/1. This Rickettsia africae (strain ESF-5) protein is GTP cyclohydrolase 1.